A 406-amino-acid chain; its full sequence is Peptidase T (406 aa).

Residue H81 participates in Zn(2+) binding. Residue D83 is part of the active site. D142 contributes to the Zn(2+) binding site. Residue E176 is the Proton acceptor of the active site. Zn(2+) contacts are provided by E177, D199, and H381.

It belongs to the peptidase M20B family. It depends on Zn(2+) as a cofactor.

The protein resides in the cytoplasm. It carries out the reaction Release of the N-terminal residue from a tripeptide.. Its function is as follows. Cleaves the N-terminal amino acid of tripeptides. The protein is Peptidase T of Streptococcus suis (strain 98HAH33).